The chain runs to 209 residues: Outer-membrane lipoprotein carrier protein (209 aa).

The first 21 residues, 1–21 (MHRQLRYAVLATALFASTAFA), serve as a signal peptide directing secretion.

Belongs to the LolA family. As to quaternary structure, monomer.

It is found in the periplasm. Participates in the translocation of lipoproteins from the inner membrane to the outer membrane. Only forms a complex with a lipoprotein if the residue after the N-terminal Cys is not an aspartate (The Asp acts as a targeting signal to indicate that the lipoprotein should stay in the inner membrane). The polypeptide is Outer-membrane lipoprotein carrier protein (Xanthomonas campestris pv. campestris (strain 8004)).